Reading from the N-terminus, the 155-residue chain is Pathogenesis-related protein B (155 aa).

Belongs to the BetVI family.

The sequence is that of Pathogenesis-related protein B (PCPR1-3) from Petroselinum crispum (Parsley).